A 56-amino-acid chain; its full sequence is Large ribosomal subunit protein eL40 (56 aa).

Belongs to the eukaryotic ribosomal protein eL40 family.

This chain is Large ribosomal subunit protein eL40, found in Saccharolobus islandicus (strain Y.N.15.51 / Yellowstone #2) (Sulfolobus islandicus).